Reading from the N-terminus, the 350-residue chain is C5a anaphylatoxin chemotactic receptor 1 (350 aa).

Over 1-37 (MDDMCSILTEEELSLYNITDCEFVKPGGLGPVLGPRH) the chain is Extracellular. The N-linked (GlcNAc...) asparagine glycan is linked to Asn17. The chain crosses the membrane as a helical span at residues 38 to 64 (LSALVFYGLVFLLGVPGNALVVWVTGF). Topologically, residues 65 to 69 (RMPRS) are cytoplasmic. The helical transmembrane segment at 70–93 (VTSLWFLNLALADLLCCLSLPLLM) threads the bilayer. The Extracellular portion of the chain corresponds to 94–110 (VPLAMDQHWPFGPVACK). The cysteines at positions 109 and 187 are disulfide-linked. A helical membrane pass occupies residues 111-132 (LLKGLLYLIMFCSVLLLVLISL). At 133–154 (DRFLLVSWPVWCQNWRRPRKAG) the chain is on the cytoplasmic side. The helical transmembrane segment at 155–174 (WVCVGVWLLALLGSIPQFVY) threads the bilayer. Residues 175 to 197 (VKEVQLSTSKSECLGLYTVASAW) are Extracellular-facing. A helical membrane pass occupies residues 198 to 223 (ANTTARFLVGFVLPFITIVTCHWVVY). At 224 to 247 (SRARRGSGVGPGRVSEARSRRTLR) the chain is on the cytoplasmic side. A helical transmembrane segment spans residues 248-270 (VIVAVSLSFFLCWFPLHILDFLV). Residues 271–287 (LSTPRHSSHSANIQLAH) are Extracellular-facing. A helical transmembrane segment spans residues 288 to 308 (TLALCLAYCNSCLNPLLYVCL). Topologically, residues 309 to 350 (GRGFKQNINRSLRNMFNFATEESVTRQSMFKSTSERTQEMNM) are cytoplasmic.

This sequence belongs to the G-protein coupled receptor 1 family. As to expression, high expression in head, kidney and posterior kidney, lower levels in peripheral blood leukocytes and spleen, low expression in brain and gills, heart, intestine and very low expression in liver and muscle.

It is found in the cell membrane. Its function is as follows. Receptor for the chemotactic and inflammatory peptide anaphylatoxin C5a. This receptor stimulates chemotaxis, granule enzyme release and superoxide anion production. The sequence is that of C5a anaphylatoxin chemotactic receptor 1 (c5ar1) from Oncorhynchus mykiss (Rainbow trout).